The chain runs to 255 residues: Sporulation-specific N-acetylmuramoyl-L-alanine amidase (255 aa).

Residues 4–172 form the MurNAc-LAA domain; the sequence is IFIDPGHGGS…LARGHANGLE (169 aa). Zn(2+) is bound by residues His10, Glu24, and His79. The active site involves Glu141. Residues 180 to 254 enclose the SPOR domain; it reads TSSSGLYKVQ…AGFDAIVILE (75 aa). Repeat copies occupy residues 184–219 and 220–255. Residues 184–255 are 2 X 35 AA approximate tandem repeats; the sequence is GLYKVQIGAF…GFDAIVILES (72 aa).

The protein belongs to the N-acetylmuramoyl-L-alanine amidase 3 family. The cofactor is Zn(2+).

Its subcellular location is the secreted. It is found in the cell wall. It carries out the reaction Hydrolyzes the link between N-acetylmuramoyl residues and L-amino acid residues in certain cell-wall glycopeptides.. Inhibited by EDTA. In terms of biological role, autolysins are involved in some important biological processes such as cell separation, cell-wall turnover, competence for genetic transformation, formation of the flagella - in particular of its basal body - and sporulation. CwlC is able to hydrolyze type A cell walls such as B.subtilis. Its main function is to lyze the mother cell wall peptidoglycan, playing a role during sporulation. This chain is Sporulation-specific N-acetylmuramoyl-L-alanine amidase (cwlC), found in Bacillus subtilis (strain 168).